Here is a 476-residue protein sequence, read N- to C-terminus: Adenylosuccinate synthetase, chloroplastic (476 aa).

Residues 1-20 (AAAAAGRGRSFSPAAPAPSS) are compositionally biased toward low complexity. The tract at residues 1–34 (AAAAAGRGRSFSPAAPAPSSVRLPGRQAPAPAAA) is disordered. GTP-binding positions include 63 to 69 (GDEGKGK) and 91 to 93 (GHT). Asp64 serves as the catalytic Proton acceptor. The Mg(2+) site is built by Asp64 and Gly91. IMP is bound by residues 64 to 67 (DEGK), 89 to 92 (NAGH), Thr181, Arg195, Gln275, Thr290, and Arg354. His92 (proton donor) is an active-site residue. A substrate-binding site is contributed by 350–356 (TTTGRPR). GTP-binding positions include Arg356, 382 to 384 (KLD), and 465 to 467 (GVG).

Belongs to the adenylosuccinate synthetase family. As to quaternary structure, homodimer. Mg(2+) is required as a cofactor.

It localises to the plastid. It is found in the chloroplast. It carries out the reaction IMP + L-aspartate + GTP = N(6)-(1,2-dicarboxyethyl)-AMP + GDP + phosphate + 2 H(+). Its pathway is purine metabolism; AMP biosynthesis via de novo pathway; AMP from IMP: step 1/2. Plays an important role in the de novo pathway and in the salvage pathway of purine nucleotide biosynthesis. Catalyzes the first committed step in the biosynthesis of AMP from IMP. This is Adenylosuccinate synthetase, chloroplastic from Triticum aestivum (Wheat).